Reading from the N-terminus, the 197-residue chain is Fucoxanthin-chlorophyll a-c binding protein C, chloroplastic (197 aa).

Residues 1 to 31 (MKTAVIASLIAGAAAFAPAKNAARTSVATNM) constitute a chloroplast transit peptide. The next 3 membrane-spanning stretches (helical) occupy residues 73-94 (ISMLAVVGYLVQEAGVRLPGTI), 113-133 (IPAGGLVQLLFFIGVLESSVM), and 174-196 (GRAAQMGILAFMVHEQLGVSLLP).

Belongs to the fucoxanthin chlorophyll protein family. As to quaternary structure, the LHC complex of chromophytic algae is composed of fucoxanthin, chlorophyll A and C bound non-covalently by fucoxanthin chlorophyll proteins (FCPs). The ratio of the pigments in LHC; fucoxanthin: chlorophyll C: chlorophyll A; (0.6-1): (0.1-0.3): (1).

Its subcellular location is the plastid. It localises to the chloroplast thylakoid membrane. Its function is as follows. The light-harvesting complex (LHC) functions as a light receptor, it captures and delivers excitation energy to photosystems with which it is closely associated. Energy is transferred from the carotenoid and chlorophyll C (or B) to chlorophyll A and the photosynthetic reaction centers where it is used to synthesize ATP and reducing power. This Phaeodactylum tricornutum (Diatom) protein is Fucoxanthin-chlorophyll a-c binding protein C, chloroplastic (FCPC).